The primary structure comprises 84 residues: U8-theraphotoxin-Hhn1e (84 aa).

The first 21 residues, 1-21 (MKVVLLVCLVWMMAMMELVSC), serve as a signal peptide directing secretion. 5 cysteine pairs are disulfide-bonded: cysteine 23–cysteine 35, cysteine 29–cysteine 44, cysteine 34–cysteine 67, cysteine 54–cysteine 75, and cysteine 69–cysteine 81.

This sequence belongs to the AVIT (prokineticin) family. As to expression, expressed by the venom gland.

The protein resides in the secreted. This Cyriopagopus hainanus (Chinese bird spider) protein is U8-theraphotoxin-Hhn1e.